Reading from the N-terminus, the 407-residue chain is Argininosuccinate synthase (407 aa).

ATP contacts are provided by residues 13–21 (AYSGGLDTS) and Ala-40. L-citrulline-binding residues include Tyr-91 and Ser-96. Gly-121 contributes to the ATP binding site. Positions 123, 127, and 128 each coordinate L-aspartate. L-citrulline is bound at residue Asn-127. Residues Arg-131, Ser-182, Ser-191, Glu-267, and Tyr-279 each contribute to the L-citrulline site.

It belongs to the argininosuccinate synthase family. Type 1 subfamily. Homotetramer.

It is found in the cytoplasm. The catalysed reaction is L-citrulline + L-aspartate + ATP = 2-(N(omega)-L-arginino)succinate + AMP + diphosphate + H(+). The protein operates within amino-acid biosynthesis; L-arginine biosynthesis; L-arginine from L-ornithine and carbamoyl phosphate: step 2/3. This chain is Argininosuccinate synthase, found in Agrobacterium fabrum (strain C58 / ATCC 33970) (Agrobacterium tumefaciens (strain C58)).